Reading from the N-terminus, the 211-residue chain is Large ribosomal subunit protein eL13 (211 aa).

Lys-16 carries the post-translational modification N6-acetyllysine. 3 positions are modified to phosphoserine: Ser-52, Ser-77, and Ser-106. Glycyl lysine isopeptide (Lys-Gly) (interchain with G-Cter in SUMO2) cross-links involve residues Lys-123 and Lys-145. Residue Lys-174 forms a Glycyl lysine isopeptide (Lys-Gly) (interchain with G-Cter in SUMO1); alternate linkage. Residues Lys-174 and Lys-177 each participate in a glycyl lysine isopeptide (Lys-Gly) (interchain with G-Cter in SUMO2); alternate cross-link. The residue at position 177 (Lys-177) is an N6-acetyllysine; alternate.

The protein belongs to the eukaryotic ribosomal protein eL13 family. As to quaternary structure, component of the 60S large ribosomal subunit (LSU).

It is found in the cytoplasm. Component of the ribosome, a large ribonucleoprotein complex responsible for the synthesis of proteins in the cell. The small ribosomal subunit (SSU) binds messenger RNAs (mRNAs) and translates the encoded message by selecting cognate aminoacyl-transfer RNA (tRNA) molecules. The large subunit (LSU) contains the ribosomal catalytic site termed the peptidyl transferase center (PTC), which catalyzes the formation of peptide bonds, thereby polymerizing the amino acids delivered by tRNAs into a polypeptide chain. The nascent polypeptides leave the ribosome through a tunnel in the LSU and interact with protein factors that function in enzymatic processing, targeting, and the membrane insertion of nascent chains at the exit of the ribosomal tunnel. As part of the LSU, it is probably required for its formation and the maturation of rRNAs. Plays a role in bone development. In Cricetulus griseus (Chinese hamster), this protein is Large ribosomal subunit protein eL13 (RPL13).